Here is a 149-residue protein sequence, read N- to C-terminus: Deoxyuridine 5'-triphosphate nucleotidohydrolase (149 aa).

Substrate-binding positions include 68–70 (RSG), asparagine 81, 85–87 (LID), and methionine 95.

The protein belongs to the dUTPase family. Mg(2+) serves as cofactor.

It carries out the reaction dUTP + H2O = dUMP + diphosphate + H(+). It functions in the pathway pyrimidine metabolism; dUMP biosynthesis; dUMP from dCTP (dUTP route): step 2/2. In terms of biological role, this enzyme is involved in nucleotide metabolism: it produces dUMP, the immediate precursor of thymidine nucleotides and it decreases the intracellular concentration of dUTP so that uracil cannot be incorporated into DNA. This Bordetella avium (strain 197N) protein is Deoxyuridine 5'-triphosphate nucleotidohydrolase.